The following is a 718-amino-acid chain: Methionine--tRNA ligase (718 aa).

The short motif at 27–37 is the 'HIGH' region element; sequence PYANGQIHIGH. Positions 158, 161, 171, and 174 each coordinate Zn(2+). The 'KMSKS' region motif lies at 348-352; sequence KMSKS. Residue Lys351 participates in ATP binding. Positions 612 to 718 constitute a tRNA-binding domain; the sequence is DFAKIDLRIA…SGAKPGMRVK (107 aa).

It belongs to the class-I aminoacyl-tRNA synthetase family. MetG type 1 subfamily. In terms of assembly, homodimer. It depends on Zn(2+) as a cofactor.

The protein localises to the cytoplasm. It catalyses the reaction tRNA(Met) + L-methionine + ATP = L-methionyl-tRNA(Met) + AMP + diphosphate. Its function is as follows. Is required not only for elongation of protein synthesis but also for the initiation of all mRNA translation through initiator tRNA(fMet) aminoacylation. This is Methionine--tRNA ligase from Burkholderia cenocepacia (strain ATCC BAA-245 / DSM 16553 / LMG 16656 / NCTC 13227 / J2315 / CF5610) (Burkholderia cepacia (strain J2315)).